The primary structure comprises 320 residues: Beta-ketoacyl-[acyl-carrier-protein] synthase III (320 aa).

Active-site residues include C112 and H245. The tract at residues 246–250 (QANIR) is ACP-binding. N275 is an active-site residue.

Belongs to the thiolase-like superfamily. FabH family. In terms of assembly, homodimer.

It is found in the cytoplasm. It carries out the reaction malonyl-[ACP] + acetyl-CoA + H(+) = 3-oxobutanoyl-[ACP] + CO2 + CoA. The protein operates within lipid metabolism; fatty acid biosynthesis. In terms of biological role, catalyzes the condensation reaction of fatty acid synthesis by the addition to an acyl acceptor of two carbons from malonyl-ACP. Catalyzes the first condensation reaction which initiates fatty acid synthesis and may therefore play a role in governing the total rate of fatty acid production. Possesses both acetoacetyl-ACP synthase and acetyl transacylase activities. Its substrate specificity determines the biosynthesis of branched-chain and/or straight-chain of fatty acids. The sequence is that of Beta-ketoacyl-[acyl-carrier-protein] synthase III from Streptococcus thermophilus (strain ATCC BAA-250 / LMG 18311).